Here is a 260-residue protein sequence, read N- to C-terminus: UPF0246 protein Bcep18194_A5551 (260 aa).

The protein belongs to the UPF0246 family.

In Burkholderia lata (strain ATCC 17760 / DSM 23089 / LMG 22485 / NCIMB 9086 / R18194 / 383), this protein is UPF0246 protein Bcep18194_A5551.